Reading from the N-terminus, the 137-residue chain is Large ribosomal subunit protein uL16 (137 aa).

Belongs to the universal ribosomal protein uL16 family. In terms of assembly, part of the 50S ribosomal subunit.

Functionally, binds 23S rRNA and is also seen to make contacts with the A and possibly P site tRNAs. The polypeptide is Large ribosomal subunit protein uL16 (Allorhizobium ampelinum (strain ATCC BAA-846 / DSM 112012 / S4) (Agrobacterium vitis (strain S4))).